The primary structure comprises 301 residues: uncharacterized protein (301 aa).

Residues glutamate 146, glutamate 148, and aspartate 177 each contribute to the a divalent metal cation site.

The protein belongs to the FAH family.

This is an uncharacterized protein from Staphylococcus haemolyticus (strain JCSC1435).